A 242-amino-acid polypeptide reads, in one-letter code: Small ribosomal subunit protein uS2 (242 aa).

This sequence belongs to the universal ribosomal protein uS2 family.

In Shewanella sediminis (strain HAW-EB3), this protein is Small ribosomal subunit protein uS2.